Reading from the N-terminus, the 774-residue chain is MTLRSVQSRSKRKPIDVFDYSDEDDRVEEESKKLLRKFDSPVTKKHHCAIDKYEFLRCFAKDTQSESKVLQHIVIDVEVPVKEEPSRCELSGDGNSDLIDVISNGSHRRIGIDSLTSSSLSENDEVSTGEATNPASDPHEVDPENAQVLIIPDVIIYGDIYCTNSKLTFSRNCMNVESSSVNATKGTFSCQWTIEDIIKIESQWCLEVETAFVNVLLKSRKPEGVDIAKDISGIDLLKFSVYDPKWSKEVETIRSLDSRYKNIWFDTITESEEIAFSGHDLGTSLTNLADSFEDLVYPQGEPDAVVVRKQDIELLKPRRFINDTIIDFYIKYLKNRISPKERGRFHFFNCFFFRKLANLDKGTPSTCGGREAYQRVQKWTKNVDLFEKDYIFIPINCSFHWSLVIICHPGELVPSHVENPQRVPCILHLDSIKGSHKGGLINIFPSYLREEWKARHENTTNDSSRAPNMQSISLELPQQENSFDCGLFLLHYLDLFVAQAPAKFNPSLISRSANFLTRNWFPAKEASLKRRNILELLYNLHKGHDPSILPANSKSEPPHCGVSNRNDQETESENVIECCNWIKPFDGSSSTVTDISQTKTCSPDLILSKEVSYSGGYDPPSSKLRKVFMSPIVEEVQESCEKKDHLEMDIQKSTGHEIETLRKEGCMLYIEDSDDEEAVSVEYVSDSQDSYEVEMKVEDDDDDELIVTGESSGIHGSREIKSDSASIERVNKSRDSTAASCYNDFLLVLSDDERSSDDKENILISSNVMAKPKT.

Residues 118–141 (SSLSENDEVSTGEATNPASDPHEV) are disordered. Catalysis depends on residues His-400, Asp-430, and Cys-485. The tract at residues 548–568 (ILPANSKSEPPHCGVSNRNDQ) is disordered.

Belongs to the peptidase C48 family.

Its function is as follows. Protease that catalyzes two essential functions in the SUMO pathway: processing of full-length SUMOs to their mature forms and deconjugation of SUMO from targeted proteins. The sequence is that of Probable ubiquitin-like-specific protease 2A (ULP2A) from Arabidopsis thaliana (Mouse-ear cress).